Here is a 66-residue protein sequence, read N- to C-terminus: Truncated interferon antagonist OPG039 (66 aa).

An ANK repeat occupies 29-58 (HGHSALYYAIADNNMRLVCTLLNAGALKNL).

The protein belongs to the orthopoxvirus OPG039 family.

This Homo sapiens (Human) protein is Truncated interferon antagonist OPG039 (OPG040).